The primary structure comprises 723 residues: Threonine--tRNA ligase 1, cytoplasmic (723 aa).

Residues 1-46 (MFEEKASSPSGKMGGEEKPIGAGEEKQKEGGKKKNKEGSGDGGRAE) form a disordered region. A compositionally biased stretch (basic and acidic residues) spans 14 to 39 (GGEEKPIGAGEEKQKEGGKKKNKEGS). Residue serine 39 is modified to Phosphoserine. One can recognise a TGS domain in the interval 79-143 (DSKPIKVTLP…EEDCTLELLK (65 aa)). N6-acetyllysine is present on lysine 243. At threonine 246 the chain carries Phosphothreonine. Tyrosine 298 bears the Phosphotyrosine mark. Threonine 453 is modified (phosphothreonine). The residue at position 702 (serine 702) is a Phosphoserine.

It belongs to the class-II aminoacyl-tRNA synthetase family. In terms of assembly, homodimer. In terms of processing, ISGylated.

Its subcellular location is the cytoplasm. It catalyses the reaction tRNA(Thr) + L-threonine + ATP = L-threonyl-tRNA(Thr) + AMP + diphosphate + H(+). Inhibited by borrelidin (BN, IC 50 is 7 nM), which binds to 4 distinct subsites in the protein, preventing binding of all 3 substrates. Catalyzes the attachment of threonine to tRNA(Thr) in a two-step reaction: threonine is first activated by ATP to form Thr-AMP and then transferred to the acceptor end of tRNA(Thr). Also edits incorrectly charged tRNA(Thr) via its editing domain, at the post-transfer stage. In Homo sapiens (Human), this protein is Threonine--tRNA ligase 1, cytoplasmic.